The sequence spans 242 residues: Probable L-ribulose-5-phosphate 4-epimerase UlaF (242 aa).

Substrate-binding positions include 31–32 (GN), 48–49 (SG), and 78–79 (SS). Zn(2+)-binding residues include Asp-80, His-99, and His-101. The active-site Proton donor/acceptor is Asp-124. His-175 is a Zn(2+) binding site. Tyr-234 acts as the Proton donor/acceptor in catalysis.

The protein belongs to the aldolase class II family. AraD/FucA subfamily. The cofactor is Zn(2+).

It catalyses the reaction L-ribulose 5-phosphate = D-xylulose 5-phosphate. The protein operates within cofactor degradation; L-ascorbate degradation; D-xylulose 5-phosphate from L-ascorbate: step 4/4. Functionally, catalyzes the isomerization of L-ribulose 5-phosphate to D-xylulose 5-phosphate. Is involved in the anaerobic L-ascorbate utilization. The chain is Probable L-ribulose-5-phosphate 4-epimerase UlaF from Mycoplasma pneumoniae (strain ATCC 29342 / M129 / Subtype 1) (Mycoplasmoides pneumoniae).